The sequence spans 2286 residues: Unconventional myosin-IXAb (2286 aa).

The Ras-associating domain occupies 16–114; that stretch reads SEFTLRVYPG…YRFLLREKNL (99 aa). In terms of domain architecture, Myosin motor spans 148-971; it reads AQFVADLCSL…LRQRLQDELH (824 aa). A helical transmembrane segment spans residues 178–198; that stretch reads IYTYVGSILIAVNPFKFLPIY. Position 242–249 (242–249) interacts with ATP; that stretch reads GESGSGKT. The interval 853–875 is actin-binding; it reads LNKLMETLGQSEPYFVKCIRSNA. 4 consecutive IQ domains span residues 976–996, 1025–1054, 1066–1095, and 1089–1118; these read RRIV…HFCR, QQGA…AVLI, RNTA…AAVT, and QRRA…QQCR. Positions 976 to 1113 are neck or regulatory domain; sequence RRIVCLQRSF…QSRQRCRILR (138 aa). A tail region spans residues 1114–2254; that stretch reads EQQCREQSKH…PRANRSCPPK (1141 aa). Disordered regions lie at residues 1118–1279, 1308–1341, 1455–1588, and 1732–1754; these read REQS…QIRE, DVPL…FSVS, CEED…EPML, and DGTI…SDTV. The segment covering 1123–1133 has biased composition (polar residues); that stretch reads HPSTVTKSLHQ. A compositionally biased stretch (basic and acidic residues) spans 1134–1149; it reads NTEEAEKLEEVWEKQT. Positions 1263-1273 are enriched in polar residues; sequence PINSAPQTPNR. The segment covering 1455 to 1465 has biased composition (acidic residues); it reads CEEDEDDEYED. The segment covering 1485–1501 has biased composition (basic and acidic residues); it reads CVFHSDSEMSSQKEQKR. Positions 1529–1542 are enriched in basic residues; it reads RGKMRFWSKSKHGD. Composition is skewed to basic and acidic residues over residues 1550 to 1562 and 1572 to 1585; these read RSAD…RRND and GVSE…ENRE. Residues 1759–1808 form a Phorbol-ester/DAG-type zinc finger; it reads GHIFKSTQYSIPTYCEFCSSLIWMMDKACVCKLCRYACHKKCCLRMTTKC. The Rho-GAP domain maps to 1823 to 2011; sequence VELSRLTSDE…LIICEQMRKY (189 aa). A compositionally biased stretch (basic residues) spans 2032 to 2049; sequence LTHIRRSMGKSRARKSGH. 2 disordered regions span residues 2032-2087 and 2113-2286; these read LTHI…QQEE and PRAS…EFMV. A coiled-coil region spans residues 2080-2107; that stretch reads QAAMQQEEKVLTQQIENLQKEKEELTYE. 2 stretches are compositionally biased toward low complexity: residues 2176-2192 and 2200-2211; these read SLDS…SVSS and SSSSGPLFSSSS. Positions 2226–2238 are enriched in polar residues; it reads EQASLSARCASSS. A compositionally biased stretch (basic and acidic residues) spans 2254 to 2270; it reads KPREPGDTGGRRREHEF.

Belongs to the TRAFAC class myosin-kinesin ATPase superfamily. Myosin family.

It localises to the membrane. The protein resides in the cytoplasm. It is found in the synapse. The protein localises to the cell projection. Its subcellular location is the growth cone. Myosins are actin-based motor molecules with ATPase activity. Unconventional myosins serve in intracellular movements. Regulates Rho by stimulating it's GTPase activity in neurons. Required for the regulation of neurite branching and motor neuron axon guidance. This is Unconventional myosin-IXAb (myo9ab) from Danio rerio (Zebrafish).